The following is a 324-amino-acid chain: Hairy/enhancer-of-split related with YRPW motif protein 2 (324 aa).

Positions 1–34 are disordered; the sequence is MKRPCEDSTSDSDMDETIDVGSENNYSGQSNGSF. Over residues 8 to 18 the composition is skewed to acidic residues; that stretch reads STSDSDMDETI. Residues 22–34 are compositionally biased toward polar residues; the sequence is SENNYSGQSNGSF. Residues 48–103 form the bHLH domain; the sequence is ARKKRRGIIEKRRRDRINNSLSELRRLVPTAFEKQGSAKLEKAEILQMTVDHLKML. The Orange domain maps to 122–157; that stretch reads LSIGFRECLTEVARYLSSVEGLDSSDPLRVRLVSHL. Positions 294 to 311 are enriched in low complexity; it reads SSSVSTSTTSQQSSGSSS. A disordered region spans residues 294-324; sequence SSSVSTSTTSQQSSGSSSKPYRPWGTEVGAF. Residues 314 to 317 carry the YRPW motif motif; the sequence is YRPW.

The protein belongs to the HEY family.

Its subcellular location is the nucleus. Functionally, transcriptional repressor. Downstream effector of Notch signaling which regulates cell fate choice in angioblasts. Represses the venous cell fate, thereby promoting the arterial cell fate and aorta formation. This is Hairy/enhancer-of-split related with YRPW motif protein 2 (hey2) from Danio rerio (Zebrafish).